The primary structure comprises 136 residues: Histone H3.3 (136 aa).

The disordered stretch occupies residues 1–45; the sequence is MARTKQTARKSTGGKAPRKQLASKAARKAAPATGGVKKPHRYRPP. Lysine 5 carries the post-translational modification N6,N6,N6-trimethyllysine; alternate. An N6,N6-dimethyllysine; alternate modification is found at lysine 5. Residues lysine 5 and lysine 10 each carry the N6-methyllysine; alternate modification. Residue lysine 10 is modified to N6-acetyllysine; alternate. Serine 11 is modified (phosphoserine). Residue lysine 15 is modified to N6,N6-dimethyllysine; alternate. N6-acetyllysine; alternate occurs at positions 15, 19, 24, 28, and 37. Residues lysine 19, lysine 24, lysine 28, and lysine 37 each carry the N6-methyllysine; alternate modification. Residues 19-32 are compositionally biased toward low complexity; it reads KQLASKAARKAAPA. 2 positions are modified to N6,N6,N6-trimethyllysine; alternate: lysine 28 and lysine 37. N6,N6-dimethyllysine; alternate occurs at positions 28 and 37. N6-acetyllysine is present on residues lysine 57 and lysine 65. Lysine 80 is modified (N6,N6,N6-trimethyllysine; alternate). Lysine 80 carries the N6,N6-dimethyllysine; alternate modification. Lysine 80 carries the post-translational modification N6-methyllysine; alternate. At lysine 123 the chain carries N6-acetyllysine.

It belongs to the histone H3 family. As to quaternary structure, the nucleosome is a histone octamer containing two molecules each of H2A, H2B, H3 and H4 assembled in one H3-H4 heterotetramer and two H2A-H2B heterodimers. The octamer wraps approximately 147 bp of DNA. Phosphorylated by ark1 to form H3S10ph in a cell cycle-dependent manner during mitosis and meiosis. H3S10ph is also formed by ssp2, promotes subsequent H3K14ac formation by gcn5, and is required for transcriptional activation through TBP recruitment to the promoters. Dephosphorylation is performed by sds21. Post-translationally, mono-, di- and trimethylated by the COMPASS complex to form H3K4me1/2/3. H3K4me activates gene expression by regulating transcription elongation and plays a role in telomere length maintenance. H3K4me enrichment correlates with transcription levels, and occurs in a 5' to 3' gradient with H3K4me3 enrichment at the 5'-end of genes, shifting to H3K4me2 and then H3K4me1. Methylated by clr4 to form H3K9me1. H3K9me1 represents a specific tag for epigenetic transcriptional repression by recruiting swi6/HP1 to methylated histones. Targeting to histone probably involves clr3 and rik1. Essential for silencing of centromeres and directional switching of the mating type. Methylated by set2 to form H3K36me. H3K36me represses gene expression. Methylated by dot1 to form H3K79me. H3K79me is required for association of SIR proteins with telomeric regions and for telomeric silencing. The COMPASS-mediated formation of H3K4me2/3 and the dot1-mediated formation of H3K79me require H2BK123ub1. In terms of processing, acetylation of histone H3 leads to transcriptional activation. H3K14ac formation by gcn5 is promoted by H3S10ph. H3K14ac can also be formed by esa1. H3K56ac formation occurs predominantly in newly synthesized H3 molecules during G1, S and G2/M of the cell cycle and may be involved in DNA repair. Acetylation at Lys-123 (H3K122ac) plays a central role in chromatin structure: localizes at the surface of the histone octamer and stimulates transcription, possibly by promoting nucleosome instability.

It is found in the nucleus. Its subcellular location is the chromosome. Functionally, core component of nucleosome. Nucleosomes wrap and compact DNA into chromatin, limiting DNA accessibility to the cellular machineries which require DNA as a template. Histones thereby play a central role in transcription regulation, DNA repair, DNA replication and chromosomal stability. DNA accessibility is regulated via a complex set of post-translational modifications of histones, also called histone code, and nucleosome remodeling. In Schizosaccharomyces pombe (strain 972 / ATCC 24843) (Fission yeast), this protein is Histone H3.3 (hht3).